Here is a 365-residue protein sequence, read N- to C-terminus: RISC-loading complex subunit TARBP2 (365 aa).

3 sufficient for interaction with PRKRA regions span residues 22 to 105 (MLAA…EPAL), 151 to 233 (SPQQ…DARD), and 286 to 365 (LGAL…AGSK). The 68-residue stretch at 30–97 (TPISLLQEYG…AEVALKHLKG (68 aa)) folds into the DRBM 1 domain. Phosphoserine is present on serine 151. 2 consecutive DRBM domains span residues 158-226 (NPVG…RVHT) and 292-360 (ACCS…YLRI). The sufficient for interaction with DICER1 stretch occupies residues 227–365 (VPLDARDGNE…QYLRIMAGSK (139 aa)).

It belongs to the TARBP2 family. As to quaternary structure, self-associates. Component of the RISC loading complex (RLC), or micro-RNA (miRNA) loading complex (miRLC), which is composed of DICER1, AGO2 and TARBP2. Note that the trimeric RLC/miRLC is also referred to as RISC. Interacts with EIF2AK2/PKR and inhibits its protein kinase activity. Interacts with DHX9. Interacts with DICER1 and PRKRA. Interacts with DICER1, AGO2, MOV10, EIF6 and RPL7A (60S ribosome subunit); they form a large RNA-induced silencing complex (RISC). Interacts with IRF7; this interaction prevents IRF7 phosphorylation and activation.

Its subcellular location is the cytoplasm. The protein resides in the perinuclear region. The protein localises to the nucleus. In terms of biological role, required for formation of the RNA induced silencing complex (RISC). Component of the RISC loading complex (RLC), also known as the micro-RNA (miRNA) loading complex (miRLC), which is composed of DICER1, AGO2 and TARBP2. Within the RLC/miRLC, DICER1 and TARBP2 are required to process precursor miRNAs (pre-miRNAs) to mature miRNAs and then load them onto AGO2. AGO2 bound to the mature miRNA constitutes the minimal RISC and may subsequently dissociate from DICER1 and TARBP2. May also play a role in the production of short interfering RNAs (siRNAs) from double-stranded RNA (dsRNA) by DICER1. Binds in vitro to the PRM1 3'-UTR. Seems to act as a repressor of translation. For some pre-miRNA substrates, may also alter the choice of cleavage site by DICER1. Negatively regulates IRF7-mediated IFN-beta signaling triggered by viral infection by inhibiting the phosphorylation of IRF7 and promoting its 'Lys'-48-linked ubiquitination and degradation. This chain is RISC-loading complex subunit TARBP2 (Tarbp2), found in Mus musculus (Mouse).